The chain runs to 346 residues: Structure-specific endonuclease subunit SLX1 (346 aa).

One can recognise a GIY-YIG domain in the interval 10–92; it reads ALYCVYILRS…TNPHTSLHIP (83 aa). Residues 238 to 296 form an SLX1-type zinc finger; that stretch reads CVVCKEEIDPEEGGLHAVCSNEGCEGVGHLRCWGRYLLKSEEGGGEGAILPVGGRCPRC. Residues 324–336 show a composition bias toward basic residues; that stretch reads KVKRKRAPRKKTA. The disordered stretch occupies residues 324 to 346; it reads KVKRKRAPRKKTAKTKETREEDG. Basic and acidic residues predominate over residues 337-346; the sequence is KTKETREEDG.

Belongs to the SLX1 family. Forms a heterodimer with SLX4. A divalent metal cation serves as cofactor.

It localises to the nucleus. Its function is as follows. Catalytic subunit of the SLX1-SLX4 structure-specific endonuclease that resolves DNA secondary structures generated during DNA repair and recombination. Has endonuclease activity towards branched DNA substrates, introducing single-strand cuts in duplex DNA close to junctions with ss-DNA. The polypeptide is Structure-specific endonuclease subunit SLX1 (Podospora anserina (strain S / ATCC MYA-4624 / DSM 980 / FGSC 10383) (Pleurage anserina)).